The sequence spans 318 residues: 5'-3' exonuclease (318 aa).

The region spanning 194 to 278 (AYAELALLRG…ATDAPVTLST (85 aa)) is the 5'-3' exonuclease domain.

Functionally, 5'-3' exonuclease acting preferentially on double-stranded DNA. This chain is 5'-3' exonuclease, found in Mycobacterium tuberculosis (strain ATCC 25618 / H37Rv).